The sequence spans 102 residues: Small ribosomal subunit protein uS10 (102 aa).

It belongs to the universal ribosomal protein uS10 family. Part of the 30S ribosomal subunit.

Functionally, involved in the binding of tRNA to the ribosomes. The protein is Small ribosomal subunit protein uS10 of Thermococcus gammatolerans (strain DSM 15229 / JCM 11827 / EJ3).